The following is a 423-amino-acid chain: Mannose-6-phosphate isomerase (423 aa).

Residue A2 is modified to N-acetylalanine. 2 positions are modified to phosphoserine: S102 and S108. Zn(2+) contacts are provided by Q110, H112, E137, and H276. The active site involves R295.

Belongs to the mannose-6-phosphate isomerase type 1 family. Zn(2+) is required as a cofactor.

The protein resides in the cytoplasm. It carries out the reaction D-mannose 6-phosphate = D-fructose 6-phosphate. The protein operates within nucleotide-sugar biosynthesis; GDP-alpha-D-mannose biosynthesis; alpha-D-mannose 1-phosphate from D-fructose 6-phosphate: step 1/2. Isomerase that catalyzes the interconversion of fructose-6-P and mannose-6-P and has a critical role in the supply of D-mannose derivatives required for many eukaryotic glycosylation reactions. The polypeptide is Mannose-6-phosphate isomerase (MPI) (Bos taurus (Bovine)).